Consider the following 428-residue polypeptide: 3-phosphoshikimate 1-carboxyvinyltransferase (428 aa).

The 3-phosphoshikimate site is built by lysine 19, serine 20, and arginine 24. Lysine 19 provides a ligand contact to phosphoenolpyruvate. Residues glycine 91 and arginine 119 each contribute to the phosphoenolpyruvate site. 3-phosphoshikimate contacts are provided by serine 164, glutamine 166, aspartate 312, and lysine 339. Glutamine 166 provides a ligand contact to phosphoenolpyruvate. Residue aspartate 312 is the Proton acceptor of the active site. Arginine 343 and arginine 386 together coordinate phosphoenolpyruvate.

Belongs to the EPSP synthase family. As to quaternary structure, monomer.

It is found in the cytoplasm. The catalysed reaction is 3-phosphoshikimate + phosphoenolpyruvate = 5-O-(1-carboxyvinyl)-3-phosphoshikimate + phosphate. The protein operates within metabolic intermediate biosynthesis; chorismate biosynthesis; chorismate from D-erythrose 4-phosphate and phosphoenolpyruvate: step 6/7. Its function is as follows. Catalyzes the transfer of the enolpyruvyl moiety of phosphoenolpyruvate (PEP) to the 5-hydroxyl of shikimate-3-phosphate (S3P) to produce enolpyruvyl shikimate-3-phosphate and inorganic phosphate. In Bacillus subtilis (strain 168), this protein is 3-phosphoshikimate 1-carboxyvinyltransferase.